Here is a 142-residue protein sequence, read N- to C-terminus: Large ribosomal subunit protein uL13 (142 aa).

Belongs to the universal ribosomal protein uL13 family. As to quaternary structure, part of the 50S ribosomal subunit.

Functionally, this protein is one of the early assembly proteins of the 50S ribosomal subunit, although it is not seen to bind rRNA by itself. It is important during the early stages of 50S assembly. The protein is Large ribosomal subunit protein uL13 of Vibrio campbellii (strain ATCC BAA-1116).